A 61-amino-acid chain; its full sequence is Small ribosomal subunit protein uS14 (61 aa).

Residues Cys24, Cys27, Cys40, and Cys43 each contribute to the Zn(2+) site.

This sequence belongs to the universal ribosomal protein uS14 family. Zinc-binding uS14 subfamily. As to quaternary structure, part of the 30S ribosomal subunit. Contacts proteins S3 and S10. Requires Zn(2+) as cofactor.

In terms of biological role, binds 16S rRNA, required for the assembly of 30S particles and may also be responsible for determining the conformation of the 16S rRNA at the A site. The chain is Small ribosomal subunit protein uS14 from Mycoplasmopsis pulmonis (strain UAB CTIP) (Mycoplasma pulmonis).